The sequence spans 619 residues: Chaperone protein HscA homolog (619 aa).

The protein belongs to the heat shock protein 70 family.

In terms of biological role, chaperone involved in the maturation of iron-sulfur cluster-containing proteins. Has a low intrinsic ATPase activity which is markedly stimulated by HscB. This chain is Chaperone protein HscA homolog, found in Acinetobacter baumannii (strain ATCC 17978 / DSM 105126 / CIP 53.77 / LMG 1025 / NCDC KC755 / 5377).